Reading from the N-terminus, the 273-residue chain is Large ribosomal subunit protein uL2 (273 aa).

Positions 228-273 (VDHPHGGGEGKTSGGRHPVTPWGFPTKGKKTRKNKRTSKFIVKKRK) are disordered. A compositionally biased stretch (basic residues) spans 254-273 (KGKKTRKNKRTSKFIVKKRK).

It belongs to the universal ribosomal protein uL2 family. As to quaternary structure, part of the 50S ribosomal subunit. Forms a bridge to the 30S subunit in the 70S ribosome.

Functionally, one of the primary rRNA binding proteins. Required for association of the 30S and 50S subunits to form the 70S ribosome, for tRNA binding and peptide bond formation. It has been suggested to have peptidyltransferase activity; this is somewhat controversial. Makes several contacts with the 16S rRNA in the 70S ribosome. In Rickettsia peacockii (strain Rustic), this protein is Large ribosomal subunit protein uL2.